The sequence spans 309 residues: MNKDHTLYCSVYIRNAFFSEIGIGISANSCLLLFHTFMFIRGHRPRLTDLPIGFVALIHLVMLLLAAYITEDFFMSSGGWDDITCKLVIFLHRFFRSLSVCATCLLSVFQAIILCPQSSHLAKLKQNSPHQLSYFFIFLSIFYTSISSHILIAAIPTQNITFVNLIYITNSCSFLPLSSSMQHTFSTLLAFRNVFVIGLMGLSTCYMATLLCRHKTRSQRLQNSKLSPKATPEQRALRTILMLMSFFLLMSTFDSIISYSRTILQGNPLPFCFQILVAHSYAAVSPLLVLSNEKRITNLLISMYEKIVL.

Topologically, residues 1–19 (MNKDHTLYCSVYIRNAFFS) are extracellular. The chain crosses the membrane as a helical span at residues 20–40 (EIGIGISANSCLLLFHTFMFI). Over 41-49 (RGHRPRLTD) the chain is Cytoplasmic. Residues 50–70 (LPIGFVALIHLVMLLLAAYIT) form a helical membrane-spanning segment. Residues 71-93 (EDFFMSSGGWDDITCKLVIFLHR) lie on the Extracellular side of the membrane. Cysteine 85 and cysteine 172 are oxidised to a cystine. Residues 94-114 (FFRSLSVCATCLLSVFQAIIL) form a helical membrane-spanning segment. Over 115 to 134 (CPQSSHLAKLKQNSPHQLSY) the chain is Cytoplasmic. A helical membrane pass occupies residues 135–155 (FFIFLSIFYTSISSHILIAAI). Over 156-187 (PTQNITFVNLIYITNSCSFLPLSSSMQHTFST) the chain is Extracellular. N-linked (GlcNAc...) asparagine glycosylation is present at asparagine 159. A helical membrane pass occupies residues 188–208 (LLAFRNVFVIGLMGLSTCYMA). Residues 209–238 (TLLCRHKTRSQRLQNSKLSPKATPEQRALR) are Cytoplasmic-facing. A helical membrane pass occupies residues 239 to 259 (TILMLMSFFLLMSTFDSIISY). The Extracellular portion of the chain corresponds to 260–268 (SRTILQGNP). A helical transmembrane segment spans residues 269–289 (LPFCFQILVAHSYAAVSPLLV). The Cytoplasmic portion of the chain corresponds to 290 to 309 (LSNEKRITNLLISMYEKIVL).

Belongs to the G-protein coupled receptor 1 family.

The protein resides in the cell membrane. Putative pheromone receptor implicated in the regulation of social and reproductive behavior. The polypeptide is Vomeronasal type-1 receptor 52 (Vmn1r52) (Mus musculus (Mouse)).